Here is a 1374-residue protein sequence, read N- to C-terminus: Y' element ATP-dependent helicase YML133C (1374 aa).

One can recognise a Helicase ATP-binding domain in the interval 375–552; sequence EIYMADTPSV…LQRIGLTGLA (178 aa). 388-395 is an ATP binding site; the sequence is APPGYGKT. The 150-residue stretch at 609–758 folds into the Helicase C-terminal domain; sequence KLLLALFEIE…EFYGLESKKG (150 aa). Low complexity predominate over residues 832–975; sequence ANASTNATTN…ATTTESTNAS (144 aa). A disordered region spans residues 832-999; that stretch reads ANASTNATTN…RFHPVTDINK (168 aa). The segment covering 976 to 999 has biased composition (basic and acidic residues); that stretch reads AKEDANKDGNAEDNRFHPVTDINK.

The protein belongs to the helicase family. Yeast subtelomeric Y' repeat subfamily.

Catalyzes DNA unwinding and is involved in telomerase-independent telomere maintenance. This is Y' element ATP-dependent helicase YML133C from Saccharomyces cerevisiae (strain ATCC 204508 / S288c) (Baker's yeast).